The following is a 94-amino-acid chain: PTS system galactitol-specific EIIB component (94 aa).

The PTS EIIB type-2 domain occupies 1 to 94; the sequence is MKRKIIVACG…QNKILTILQG (94 aa). Catalysis depends on cysteine 9, which acts as the Phosphocysteine intermediate; for EIIB activity. Cysteine 9 bears the Phosphocysteine; by EIIA mark.

As to quaternary structure, forms a complex with one each of subunit of GatA, GatB and 2 subunits of GatC.

It localises to the cytoplasm. It catalyses the reaction galactitol(out) + N(pros)-phospho-L-histidyl-[protein] = galactitol 1-phosphate(in) + L-histidyl-[protein]. Its function is as follows. The phosphoenolpyruvate-dependent sugar phosphotransferase system (PTS), a major carbohydrate active transport system, catalyzes the phosphorylation of incoming sugar substrates concomitant with their translocation across the cell membrane. The enzyme II complex composed of GatA, GatB and GatC is involved in galactitol transport. This Escherichia coli O157:H7 protein is PTS system galactitol-specific EIIB component (gatB).